The chain runs to 211 residues: NADH-quinone oxidoreductase subunit C (211 aa).

The protein belongs to the complex I 30 kDa subunit family. NDH-1 is composed of 14 different subunits. Subunits NuoB, C, D, E, F, and G constitute the peripheral sector of the complex.

It is found in the cell inner membrane. The catalysed reaction is a quinone + NADH + 5 H(+)(in) = a quinol + NAD(+) + 4 H(+)(out). NDH-1 shuttles electrons from NADH, via FMN and iron-sulfur (Fe-S) centers, to quinones in the respiratory chain. The immediate electron acceptor for the enzyme in this species is believed to be ubiquinone. Couples the redox reaction to proton translocation (for every two electrons transferred, four hydrogen ions are translocated across the cytoplasmic membrane), and thus conserves the redox energy in a proton gradient. This chain is NADH-quinone oxidoreductase subunit C, found in Azorhizobium caulinodans (strain ATCC 43989 / DSM 5975 / JCM 20966 / LMG 6465 / NBRC 14845 / NCIMB 13405 / ORS 571).